The sequence spans 530 residues: Portal protein B (530 aa).

The protein belongs to the siphoviridae portal protein family. As to quaternary structure, homododecamer. Interacts with the terminase complex composed of two small and one large terminase subunits. Post-translationally, proteolytically cleaved by the viral protease during capsid maturation.

The protein localises to the virion. Functionally, forms the portal vertex of the capsid. This portal plays critical roles in head assembly, genome packaging, neck/tail attachment, and genome ejection. The portal protein multimerizes as a single ring-shaped homododecamer arranged around a central channel. Binds to the terminase subunits to form the packaging machine. This Enterobacteria phage P21 (Bacteriophage 21) protein is Portal protein B.